The primary structure comprises 922 residues: Probable dipeptidyl-aminopeptidase B (922 aa).

Residues 1–16 (MATEKGHSRDDEERVP) show a composition bias toward basic and acidic residues. Residues 1 to 21 (MATEKGHSRDDEERVPLTRGS) are disordered. At 1 to 99 (MATEKGHSRD…KPMHKSVKIA (99 aa)) the chain is on the cytoplasmic side. The helical; Signal-anchor for type II membrane protein transmembrane segment at 100 to 120 (LWSLLFLSLGGWSLAFVLFIF) threads the bilayer. Over 121–922 (RSHDTYQTPI…AGLYKFKHLC (802 aa)) the chain is Vacuolar. Residues Asn135, Asn200, Asn351, and Asn574 are each glycosylated (N-linked (GlcNAc...) asparagine). Ser756 functions as the Charge relay system in the catalytic mechanism. Asn815 carries an N-linked (GlcNAc...) asparagine glycan. Residues Asp833 and His866 each act as charge relay system in the active site. N-linked (GlcNAc...) asparagine glycosylation occurs at Asn902.

It belongs to the peptidase S9B family.

The protein resides in the vacuole membrane. It carries out the reaction Release of an N-terminal dipeptide, Xaa-Yaa-|-Zaa-, from a polypeptide, preferentially when Yaa is Pro, provided Zaa is neither Pro nor hydroxyproline.. In terms of biological role, type IV dipeptidyl-peptidase which removes N-terminal dipeptides sequentially from polypeptides having unsubstituted N-termini provided that the penultimate residue is proline. This Ajellomyces capsulatus (strain NAm1 / WU24) (Darling's disease fungus) protein is Probable dipeptidyl-aminopeptidase B (DAPB).